The primary structure comprises 211 residues: CASP-like protein 1B1 (211 aa).

A disordered region spans residues 1 to 29; the sequence is MDLERGSKTPPSSAPAAAAATTTTSTCCS. Topologically, residues 1–55 are cytoplasmic; sequence MDLERGSKTPPSSAPAAAAATTTTSTCCSNKRPQLRDRLVALQPVVLRAAATLAT. Low complexity predominate over residues 9 to 26; the sequence is TPPSSAPAAAAATTTTST. Residues 56 to 76 form a helical membrane-spanning segment; that stretch reads AVAAAVMALNAQSYTAVVAIV. The Extracellular portion of the chain corresponds to 77–94; that stretch reads GTRPLTQTFTTKFRDTPA. A helical transmembrane segment spans residues 95 to 115; the sequence is FVYFVIANAIAAVYNLVMLLF. The Cytoplasmic portion of the chain corresponds to 116–123; the sequence is RCLILRRR. The chain crosses the membrane as a helical span at residues 124-144; it reads MAGLVVHMLDMVIMALLATGA. Over 145 to 176 the chain is Extracellular; the sequence is ATAAAMAELGKNGNVHARWNPICDRFGSFCSR. The chain crosses the membrane as a helical span at residues 177-197; that stretch reads GGVALASSFTGVALMLALNLL. Topologically, residues 198–211 are cytoplasmic; the sequence is SAASNAQCSPGQYE.

It belongs to the Casparian strip membrane proteins (CASP) family. In terms of assembly, homodimer and heterodimers.

The protein localises to the cell membrane. The polypeptide is CASP-like protein 1B1 (Sorghum bicolor (Sorghum)).